Reading from the N-terminus, the 892-residue chain is Alanine--tRNA ligase (892 aa).

The Zn(2+) site is built by histidine 594, histidine 598, cysteine 702, and histidine 706.

It belongs to the class-II aminoacyl-tRNA synthetase family. The cofactor is Zn(2+).

It localises to the cytoplasm. The catalysed reaction is tRNA(Ala) + L-alanine + ATP = L-alanyl-tRNA(Ala) + AMP + diphosphate. Its function is as follows. Catalyzes the attachment of alanine to tRNA(Ala) in a two-step reaction: alanine is first activated by ATP to form Ala-AMP and then transferred to the acceptor end of tRNA(Ala). Also edits incorrectly charged Ser-tRNA(Ala) and Gly-tRNA(Ala) via its editing domain. In Pyrobaculum aerophilum (strain ATCC 51768 / DSM 7523 / JCM 9630 / CIP 104966 / NBRC 100827 / IM2), this protein is Alanine--tRNA ligase.